The primary structure comprises 224 residues: Pyridoxine/pyridoxamine 5'-phosphate oxidase (224 aa).

Residues 14 to 17 and Lys-76 contribute to the substrate site; that span reads REHY. FMN-binding positions include 71–76, 86–87, Arg-92, Lys-93, and Gln-115; these read RTVLMK and YT. Substrate-binding residues include Tyr-133, Arg-137, and Ser-141. Residues 150–151 and Trp-196 each bind FMN; that span reads QS. Residue 202 to 204 coordinates substrate; it reads RLH. Arg-206 is a binding site for FMN.

The protein belongs to the pyridoxamine 5'-phosphate oxidase family. Homodimer. FMN is required as a cofactor.

The catalysed reaction is pyridoxamine 5'-phosphate + O2 + H2O = pyridoxal 5'-phosphate + H2O2 + NH4(+). It catalyses the reaction pyridoxine 5'-phosphate + O2 = pyridoxal 5'-phosphate + H2O2. Its pathway is cofactor metabolism; pyridoxal 5'-phosphate salvage; pyridoxal 5'-phosphate from pyridoxamine 5'-phosphate: step 1/1. It functions in the pathway cofactor metabolism; pyridoxal 5'-phosphate salvage; pyridoxal 5'-phosphate from pyridoxine 5'-phosphate: step 1/1. Functionally, catalyzes the oxidation of either pyridoxine 5'-phosphate (PNP) or pyridoxamine 5'-phosphate (PMP) into pyridoxal 5'-phosphate (PLP). The protein is Pyridoxine/pyridoxamine 5'-phosphate oxidase of Streptomyces avermitilis (strain ATCC 31267 / DSM 46492 / JCM 5070 / NBRC 14893 / NCIMB 12804 / NRRL 8165 / MA-4680).